We begin with the raw amino-acid sequence, 293 residues long: NAD kinase (293 aa).

Asp72 acts as the Proton acceptor in catalysis. Residues 72 to 73 (DG), 146 to 147 (ND), Arg157, Arg174, Asp176, 187 to 192 (TAYALS), and Gln247 each bind NAD(+).

The protein belongs to the NAD kinase family. A divalent metal cation serves as cofactor.

It is found in the cytoplasm. The enzyme catalyses NAD(+) + ATP = ADP + NADP(+) + H(+). Functionally, involved in the regulation of the intracellular balance of NAD and NADP, and is a key enzyme in the biosynthesis of NADP. Catalyzes specifically the phosphorylation on 2'-hydroxyl of the adenosine moiety of NAD to yield NADP. The chain is NAD kinase from Teredinibacter turnerae (strain ATCC 39867 / T7901).